The chain runs to 280 residues: Putative pyruvate, phosphate dikinase regulatory protein (280 aa).

152 to 159 (GISRTSKT) contacts ADP.

This sequence belongs to the pyruvate, phosphate/water dikinase regulatory protein family. PDRP subfamily.

The enzyme catalyses N(tele)-phospho-L-histidyl/L-threonyl-[pyruvate, phosphate dikinase] + ADP = N(tele)-phospho-L-histidyl/O-phospho-L-threonyl-[pyruvate, phosphate dikinase] + AMP + H(+). It catalyses the reaction N(tele)-phospho-L-histidyl/O-phospho-L-threonyl-[pyruvate, phosphate dikinase] + phosphate + H(+) = N(tele)-phospho-L-histidyl/L-threonyl-[pyruvate, phosphate dikinase] + diphosphate. Functionally, bifunctional serine/threonine kinase and phosphorylase involved in the regulation of the pyruvate, phosphate dikinase (PPDK) by catalyzing its phosphorylation/dephosphorylation. In Clostridioides difficile (strain 630) (Peptoclostridium difficile), this protein is Putative pyruvate, phosphate dikinase regulatory protein.